Reading from the N-terminus, the 1435-residue chain is Gag-Pol polyprotein (1435 aa).

Residue Gly2 is the site of N-myristoyl glycine; by host attachment. An interaction with Gp41 region spans residues Val7–Leu31. Residues Leu8 to Arg43 form an interaction with host CALM1 region. Residues Glu12–Ile19 form an interaction with host AP3D1 region. Residues Asp14–His33 are interaction with membrane phosphatidylinositol 4,5-bisphosphate and RNA. The short motif at Trp16–Arg22 is the Nuclear export signal element. The Nuclear localization signal signature appears at Lys26–Lys32. The tract at residues Glu73–Ser77 is interaction with membrane phosphatidylinositol 4,5-bisphosphate. The interval Glu106–Val128 is disordered. Tyr132 carries the phosphotyrosine; by host modification. Ser148 carries the phosphoserine; by host MAPK1 modification. Residues Asn189–Gln227 are interaction with human PPIA/CYPA and NUP153. Residues Tyr277 to Leu363 are dimerization/Multimerization of capsid protein p24. 2 consecutive CCHC-type zinc fingers follow at residues Val390–Ala407 and Lys411–Glu428. The segment at Lys444 to Gln464 is disordered. The dimerization of protease stretch occupies residues Pro489–Leu493. The region spanning Lys508–Leu577 is the Peptidase A2 domain. The active-site For protease activity; shared with dimeric partner is the Asp513. Dimerization of protease regions lie at residues Gly537–Lys543 and Asn576–Pro588. A Reverse transcriptase domain is found at Glu631–Leu821. 3 residues coordinate Mg(2+): Asp697, Asp772, and Asp773. The segment at Phe814 to His822 is RT 'primer grip'. The Tryptophan repeat motif signature appears at Trp985–Trp1001. The RNase H type-1 domain occupies Ile1021 to Arg1144. Residues Asp1030, Glu1065, Asp1085, and Asp1136 each coordinate Mg(2+). An Integrase-type zinc finger spans residues Asp1150–Gln1191. The Zn(2+) site is built by His1159, His1163, Cys1187, and Cys1190. Residues Val1201–Ile1351 enclose the Integrase catalytic domain. Mg(2+) contacts are provided by Asp1211, Asp1263, and Glu1299. The segment at residues Phe1370 to Asp1417 is a DNA-binding region (integrase-type).

As to quaternary structure, homotrimer; further assembles as hexamers of trimers. Matrix protein p17: Interacts with gp41 (via C-terminus). Interacts with host CALM1; this interaction induces a conformational change in the Matrix protein, triggering exposure of the myristate group. Interacts with host AP3D1; this interaction allows the polyprotein trafficking to multivesicular bodies during virus assembly. Part of the pre-integration complex (PIC) which is composed of viral genome, matrix protein, Vpr and integrase. Homodimer; the homodimer further multimerizes as homohexamers or homopentamers. Interacts with human PPIA/CYPA; This interaction stabilizes the capsid. Interacts with human NUP153. Interacts with host PDZD8; this interaction stabilizes the capsid. Interacts with monkey TRIM5; this interaction destabilizes the capsid. In terms of assembly, homodimer, whose active site consists of two apposed aspartic acid residues. As to quaternary structure, heterodimer of p66 RT and p51 RT (RT p66/p51). Heterodimerization of RT is essential for DNA polymerase activity. The overall folding of the subdomains is similar in p66 RT and p51 RT but the spatial arrangements of the subdomains are dramatically different. Homotetramer; may further associate as a homohexadecamer. Part of the pre-integration complex (PIC) which is composed of viral genome, matrix protein, Vpr and integrase. Interacts with human SMARCB1/INI1 and human PSIP1/LEDGF isoform 1. Interacts with human KPNA3; this interaction might play a role in nuclear import of the pre-integration complex. Interacts with human NUP153; this interaction might play a role in nuclear import of the pre-integration complex. Mg(2+) serves as cofactor. Specific enzymatic cleavages by the viral protease yield mature proteins. The protease is released by autocatalytic cleavage. The polyprotein is cleaved during and after budding, this process is termed maturation. Proteolytic cleavage of p66 RT removes the RNase H domain to yield the p51 RT subunit. Nucleocapsid protein p7 might be further cleaved after virus entry. In terms of processing, tyrosine phosphorylated presumably in the virion by a host kinase. Phosphorylation is apparently not a major regulator of membrane association. Post-translationally, phosphorylated possibly by host MAPK1; this phosphorylation is necessary for Pin1-mediated virion uncoating. Methylated by host PRMT6, impairing its function by reducing RNA annealing and the initiation of reverse transcription.

It localises to the host cell membrane. It is found in the host endosome. The protein localises to the host multivesicular body. Its subcellular location is the virion membrane. The protein resides in the host nucleus. It localises to the host cytoplasm. It is found in the virion. It carries out the reaction Specific for a P1 residue that is hydrophobic, and P1' variable, but often Pro.. It catalyses the reaction Endohydrolysis of RNA in RNA/DNA hybrids. Three different cleavage modes: 1. sequence-specific internal cleavage of RNA. Human immunodeficiency virus type 1 and Moloney murine leukemia virus enzymes prefer to cleave the RNA strand one nucleotide away from the RNA-DNA junction. 2. RNA 5'-end directed cleavage 13-19 nucleotides from the RNA end. 3. DNA 3'-end directed cleavage 15-20 nucleotides away from the primer terminus.. The enzyme catalyses 3'-end directed exonucleolytic cleavage of viral RNA-DNA hybrid.. The catalysed reaction is DNA(n) + a 2'-deoxyribonucleoside 5'-triphosphate = DNA(n+1) + diphosphate. With respect to regulation, protease: The viral protease is inhibited by many synthetic protease inhibitors (PIs), such as amprenavir, atazanavir, indinavir, loprinavir, nelfinavir, ritonavir and saquinavir. Use of protease inhibitors in tritherapy regimens permit more ambitious therapeutic strategies. Reverse transcriptase/ribonuclease H: RT can be inhibited either by nucleoside RT inhibitors (NRTIs) or by non nucleoside RT inhibitors (NNRTIs). NRTIs act as chain terminators, whereas NNRTIs inhibit DNA polymerization by binding a small hydrophobic pocket near the RT active site and inducing an allosteric change in this region. Classical NRTIs are abacavir, adefovir (PMEA), didanosine (ddI), lamivudine (3TC), stavudine (d4T), tenofovir (PMPA), zalcitabine (ddC), and zidovudine (AZT). Classical NNRTIs are atevirdine (BHAP U-87201E), delavirdine, efavirenz (DMP-266), emivirine (I-EBU), and nevirapine (BI-RG-587). The tritherapies used as a basic effective treatment of AIDS associate two NRTIs and one NNRTI. Functionally, mediates, with Gag polyprotein, the essential events in virion assembly, including binding the plasma membrane, making the protein-protein interactions necessary to create spherical particles, recruiting the viral Env proteins, and packaging the genomic RNA via direct interactions with the RNA packaging sequence (Psi). Gag-Pol polyprotein may regulate its own translation, by the binding genomic RNA in the 5'-UTR. At low concentration, the polyprotein would promote translation, whereas at high concentration, the polyprotein would encapsidate genomic RNA and then shut off translation. Targets the polyprotein to the plasma membrane via a multipartite membrane-binding signal, that includes its myristoylated N-terminus. Matrix protein is part of the pre-integration complex. Implicated in the release from host cell mediated by Vpu. Binds to RNA. Its function is as follows. Forms the conical core that encapsulates the genomic RNA-nucleocapsid complex in the virion. Most core are conical, with only 7% tubular. The core is constituted by capsid protein hexamer subunits. The core is disassembled soon after virion entry. Host restriction factors such as TRIM5-alpha or TRIMCyp bind retroviral capsids and cause premature capsid disassembly, leading to blocks in reverse transcription. Capsid restriction by TRIM5 is one of the factors which restricts HIV-1 to the human species. Host PIN1 apparently facilitates the virion uncoating. On the other hand, interactions with PDZD8 or CYPA stabilize the capsid. In terms of biological role, encapsulates and protects viral dimeric unspliced genomic RNA (gRNA). Binds these RNAs through its zinc fingers. Acts as a nucleic acid chaperone which is involved in rearangement of nucleic acid secondary structure during gRNA retrotranscription. Also facilitates template switch leading to recombination. As part of the polyprotein, participates in gRNA dimerization, packaging, tRNA incorporation and virion assembly. Functionally, aspartyl protease that mediates proteolytic cleavages of Gag and Gag-Pol polyproteins during or shortly after the release of the virion from the plasma membrane. Cleavages take place as an ordered, step-wise cascade to yield mature proteins. This process is called maturation. Displays maximal activity during the budding process just prior to particle release from the cell. Also cleaves Nef and Vif, probably concomitantly with viral structural proteins on maturation of virus particles. Hydrolyzes host EIF4GI and PABP1 in order to shut off the capped cellular mRNA translation. The resulting inhibition of cellular protein synthesis serves to ensure maximal viral gene expression and to evade host immune response. Also mediates cleavage of host YTHDF3. Mediates cleavage of host CARD8, thereby activating the CARD8 inflammasome, leading to the clearance of latent HIV-1 in patient CD4(+) T-cells after viral reactivation; in contrast, HIV-1 can evade CARD8-sensing when its protease remains inactive in infected cells prior to viral budding. Multifunctional enzyme that converts the viral RNA genome into dsDNA in the cytoplasm, shortly after virus entry into the cell. This enzyme displays a DNA polymerase activity that can copy either DNA or RNA templates, and a ribonuclease H (RNase H) activity that cleaves the RNA strand of RNA-DNA heteroduplexes in a partially processive 3' to 5' endonucleasic mode. Conversion of viral genomic RNA into dsDNA requires many steps. A tRNA(3)-Lys binds to the primer-binding site (PBS) situated at the 5'-end of the viral RNA. RT uses the 3' end of the tRNA primer to perform a short round of RNA-dependent minus-strand DNA synthesis. The reading proceeds through the U5 region and ends after the repeated (R) region which is present at both ends of viral RNA. The portion of the RNA-DNA heteroduplex is digested by the RNase H, resulting in a ssDNA product attached to the tRNA primer. This ssDNA/tRNA hybridizes with the identical R region situated at the 3' end of viral RNA. This template exchange, known as minus-strand DNA strong stop transfer, can be either intra- or intermolecular. RT uses the 3' end of this newly synthesized short ssDNA to perform the RNA-dependent minus-strand DNA synthesis of the whole template. RNase H digests the RNA template except for two polypurine tracts (PPTs) situated at the 5'-end and near the center of the genome. It is not clear if both polymerase and RNase H activities are simultaneous. RNase H probably can proceed both in a polymerase-dependent (RNA cut into small fragments by the same RT performing DNA synthesis) and a polymerase-independent mode (cleavage of remaining RNA fragments by free RTs). Secondly, RT performs DNA-directed plus-strand DNA synthesis using the PPTs that have not been removed by RNase H as primers. PPTs and tRNA primers are then removed by RNase H. The 3' and 5' ssDNA PBS regions hybridize to form a circular dsDNA intermediate. Strand displacement synthesis by RT to the PBS and PPT ends produces a blunt ended, linear dsDNA copy of the viral genome that includes long terminal repeats (LTRs) at both ends. Its function is as follows. Catalyzes viral DNA integration into the host chromosome, by performing a series of DNA cutting and joining reactions. This enzyme activity takes place after virion entry into a cell and reverse transcription of the RNA genome in dsDNA. The first step in the integration process is 3' processing. This step requires a complex comprising the viral genome, matrix protein, Vpr and integrase. This complex is called the pre-integration complex (PIC). The integrase protein removes 2 nucleotides from each 3' end of the viral DNA, leaving recessed CA OH's at the 3' ends. In the second step, the PIC enters cell nucleus. This process is mediated through integrase and Vpr proteins, and allows the virus to infect a non dividing cell. This ability to enter the nucleus is specific of lentiviruses, other retroviruses cannot and rely on cell division to access cell chromosomes. In the third step, termed strand transfer, the integrase protein joins the previously processed 3' ends to the 5' ends of strands of target cellular DNA at the site of integration. The 5'-ends are produced by integrase-catalyzed staggered cuts, 5 bp apart. A Y-shaped, gapped, recombination intermediate results, with the 5'-ends of the viral DNA strands and the 3' ends of target DNA strands remaining unjoined, flanking a gap of 5 bp. The last step is viral DNA integration into host chromosome. This involves host DNA repair synthesis in which the 5 bp gaps between the unjoined strands are filled in and then ligated. Since this process occurs at both cuts flanking the HIV genome, a 5 bp duplication of host DNA is produced at the ends of HIV-1 integration. Alternatively, Integrase may catalyze the excision of viral DNA just after strand transfer, this is termed disintegration. The sequence is that of Gag-Pol polyprotein (gag-pol) from Human immunodeficiency virus type 1 group M subtype B (isolate NY5) (HIV-1).